A 232-amino-acid polypeptide reads, in one-letter code: Orotidine 5'-phosphate decarboxylase (232 aa).

Residues Asp-11, Lys-33, 60 to 69 (DLKFHDIPTT), Thr-120, Arg-181, Gln-191, Gly-211, and Arg-212 each bind substrate. Residue Lys-62 is the Proton donor of the active site.

It belongs to the OMP decarboxylase family. Type 1 subfamily. Homodimer.

It catalyses the reaction orotidine 5'-phosphate + H(+) = UMP + CO2. The protein operates within pyrimidine metabolism; UMP biosynthesis via de novo pathway; UMP from orotate: step 2/2. Functionally, catalyzes the decarboxylation of orotidine 5'-monophosphate (OMP) to uridine 5'-monophosphate (UMP). The chain is Orotidine 5'-phosphate decarboxylase from Tolumonas auensis (strain DSM 9187 / NBRC 110442 / TA 4).